We begin with the raw amino-acid sequence, 109 residues long: Cell division protein ZapA (109 aa).

Residues Pro21–Arg99 are a coiled coil.

The protein belongs to the ZapA family. Type 1 subfamily. As to quaternary structure, homodimer. Interacts with FtsZ.

It is found in the cytoplasm. Functionally, activator of cell division through the inhibition of FtsZ GTPase activity, therefore promoting FtsZ assembly into bundles of protofilaments necessary for the formation of the division Z ring. It is recruited early at mid-cell but it is not essential for cell division. The polypeptide is Cell division protein ZapA (Cronobacter sakazakii (strain ATCC BAA-894) (Enterobacter sakazakii)).